The chain runs to 332 residues: Ribosomal RNA small subunit methyltransferase C (332 aa).

It belongs to the methyltransferase superfamily. RsmC family. As to quaternary structure, monomer.

It is found in the cytoplasm. It carries out the reaction guanosine(1207) in 16S rRNA + S-adenosyl-L-methionine = N(2)-methylguanosine(1207) in 16S rRNA + S-adenosyl-L-homocysteine + H(+). Its function is as follows. Specifically methylates the guanine in position 1207 of 16S rRNA in the 30S particle. This Pseudomonas putida (strain ATCC 700007 / DSM 6899 / JCM 31910 / BCRC 17059 / LMG 24140 / F1) protein is Ribosomal RNA small subunit methyltransferase C.